The chain runs to 84 residues: RNA-binding protein Hfq (84 aa).

The Sm domain maps to 10–69 (EPFLNTLRREHVPVSIYLVNGIKLQGQIESFDQYVVLLRNTVTQMVFKHAISTIVPGRAV).

It belongs to the Hfq family. As to quaternary structure, homohexamer.

Functionally, RNA chaperone that binds small regulatory RNA (sRNAs) and mRNAs to facilitate mRNA translational regulation in response to envelope stress, environmental stress and changes in metabolite concentrations. Also binds with high specificity to tRNAs. The sequence is that of RNA-binding protein Hfq from Verminephrobacter eiseniae (strain EF01-2).